Here is a 126-residue protein sequence, read N- to C-terminus: MSIPADLKYTESHEWVRTEADGTLTVGITDHAQEALGDIVFFEVQELGKTVSAGDTVAVIESVKAASDIYAPVSGEIIEANSAVADTPDLVNSTPYESWLFKIKPAADAALDRLIDADAYSKSIGA.

Residues 23 to 104 (TLTVGITDHA…PYESWLFKIK (82 aa)) form the Lipoyl-binding domain. N6-lipoyllysine is present on Lys64.

This sequence belongs to the GcvH family. In terms of assembly, the glycine cleavage system is composed of four proteins: P, T, L and H. It depends on (R)-lipoate as a cofactor.

In terms of biological role, the glycine cleavage system catalyzes the degradation of glycine. The H protein shuttles the methylamine group of glycine from the P protein to the T protein. This is Glycine cleavage system H protein from Paraburkholderia xenovorans (strain LB400).